We begin with the raw amino-acid sequence, 248 residues long: Anamorsin homolog (248 aa).

Residues 4–130 (FKGLQKSLYI…ETGSSARLSF (127 aa)) are N-terminal SAM-like domain. The tract at residues 131–161 (AKKSPSMNVWKISGDDEELIDEEELLDEEDK) is linker. 4 residues coordinate [2Fe-2S] cluster: Cys172, Cys181, Cys184, and Cys186. The interval 172–186 (CSTTGKRKACKNCSC) is fe-S binding site A. The [4Fe-4S] cluster site is built by Cys209, Cys212, Cys220, and Cys223. Short sequence motifs (cx2C motif) lie at residues 209–212 (CGNC) and 220–223 (CSTC). Positions 209-223 (CGNCYLGDAFRCSTC) are fe-S binding site B.

Belongs to the anamorsin family. In terms of assembly, monomer. The cofactor is [2Fe-2S] cluster. [4Fe-4S] cluster serves as cofactor.

The protein resides in the cytoplasm. It is found in the mitochondrion intermembrane space. Component of the cytosolic iron-sulfur (Fe-S) protein assembly (CIA) machinery. Required for the maturation of extramitochondrial Fe-S proteins. Part of an electron transfer chain functioning in an early step of cytosolic Fe-S biogenesis, facilitating the de novo assembly of a [4Fe-4S] cluster on the cytosolic Fe-S scaffold complex. Electrons are transferred from NADPH via a FAD- and FMN-containing diflavin oxidoreductase. Together with the diflavin oxidoreductase, also required for the assembly of the diferric tyrosyl radical cofactor of ribonucleotide reductase (RNR), probably by providing electrons for reduction during radical cofactor maturation in the catalytic small subunit. The chain is Anamorsin homolog from Drosophila mojavensis (Fruit fly).